We begin with the raw amino-acid sequence, 174 residues long: Transgelin (174 aa).

The region spanning 3–109 (SQLEKEAREW…SIHSFSRYAA (107 aa)) is the Calponin-homology (CH) domain.

In terms of assembly, binds to actin.

The protein localises to the cytoplasm. Functionally, has actin-binding and actin-bundling activity and is a component of the actin patch. Stabilizes actin filaments against disassembly. Cross-links F-actin and is required for the formation of the contractile F-actin ring. This Schizosaccharomyces pombe (strain 972 / ATCC 24843) (Fission yeast) protein is Transgelin (stg1).